Reading from the N-terminus, the 236-residue chain is tRNA (guanine-N(1)-)-methyltransferase (236 aa).

S-adenosyl-L-methionine-binding positions include Gly116 and 136–141; that span reads LGDFVL.

The protein belongs to the RNA methyltransferase TrmD family. As to quaternary structure, homodimer.

Its subcellular location is the cytoplasm. It catalyses the reaction guanosine(37) in tRNA + S-adenosyl-L-methionine = N(1)-methylguanosine(37) in tRNA + S-adenosyl-L-homocysteine + H(+). In terms of biological role, specifically methylates guanosine-37 in various tRNAs. In Thiobacillus denitrificans (strain ATCC 25259 / T1), this protein is tRNA (guanine-N(1)-)-methyltransferase.